The chain runs to 180 residues: Protein Flattop (180 aa).

A disordered region spans residues 111 to 180 (PQISGKASGK…AGDKVLQAQS (70 aa)).

Belongs to the Flattop family.

Its subcellular location is the cytoplasm. It is found in the cytoskeleton. The protein resides in the cilium basal body. It localises to the cell projection. The protein localises to the cilium. Its subcellular location is the apical cell membrane. It is found in the cilium axoneme. In terms of biological role, microtubule inner protein (MIP) part of the dynein-decorated doublet microtubules (DMTs) in cilia axoneme. Acts as a regulator of cilium basal body docking and positioning in mono- and multiciliated cells. Regulates basal body docking and cilia formation in multiciliated lung cells. Regulates kinocilium positioning and stereocilia bundle morphogenesis in the inner ear. This is Protein Flattop from Xenopus laevis (African clawed frog).